Here is a 307-residue protein sequence, read N- to C-terminus: 17-beta-hydroxysteroid dehydrogenase type 3 (307 aa).

Residues 6-26 (IIFVLTGTCAILVFGGKIASL) form a helical membrane-spanning segment. Residue 47 to 76 (GKWAVITGGSDGIGRAYAEELSKQGMSVII) participates in NADP(+) binding. Ser187 is a binding site for substrate. The active-site Proton acceptor is Tyr200.

The protein belongs to the short-chain dehydrogenases/reductases (SDR) family. Expression shows strong sexual dimorphism. In female, highly expressed in ovaries, and at lower levels in skin muscle, eyes and liver. In males, strongly expressed in liver and at lower levels in testis, spleen, kidney, intestine and muscle.

It is found in the endoplasmic reticulum. It localises to the membrane. It carries out the reaction a 17beta-hydroxy steroid + NADP(+) = a 17-oxo steroid + NADPH + H(+). It catalyses the reaction testosterone + NADP(+) = androst-4-ene-3,17-dione + NADPH + H(+). The enzyme catalyses 3beta-hydroxyandrost-5-en-17-one + NADPH + H(+) = androst-5-en-3beta,17beta-diol + NADP(+). The catalysed reaction is 3beta-hydroxy-5alpha-androstan-17-one + NADPH + H(+) = 5alpha-androstane-3beta,17beta-diol + NADP(+). It carries out the reaction androst-4-ene-3,11,17-trione + NADPH + H(+) = 17beta-hydroxyandrost-4-ene-3,11-dione + NADP(+). It catalyses the reaction 11beta-hydroxyandrost-4-ene-3,17-dione + NADPH + H(+) = 11beta,17beta-dihydroxyandrost-4-ene-3-one + NADP(+). Its pathway is hormone biosynthesis; testosterone biosynthesis. It functions in the pathway steroid metabolism. In terms of biological role, catalyzes the conversion of 17-oxosteroids to 17beta-hydroxysteroids in the presence of NADPH. Favors the reduction of androstenedione to testosterone. Testosterone is the key androgen driving male development and function. Among further tested androgens epiandrosterone and dehydroepiandrosterone are accepted as substrates and reduced at C-17. Can also reduce 11-ketoandrostenedione as well as 11beta-hydroxyandrostenedione at C-17 to the respective testosterone forms. Cannot use androsterone and androstanedione as substrates. The sequence is that of 17-beta-hydroxysteroid dehydrogenase type 3 (hsd17b3) from Danio rerio (Zebrafish).